Reading from the N-terminus, the 124-residue chain is Large ribosomal subunit protein bL20 (124 aa).

The protein belongs to the bacterial ribosomal protein bL20 family.

Its function is as follows. Binds directly to 23S ribosomal RNA and is necessary for the in vitro assembly process of the 50S ribosomal subunit. It is not involved in the protein synthesizing functions of that subunit. This Mycoplasma genitalium (strain ATCC 33530 / DSM 19775 / NCTC 10195 / G37) (Mycoplasmoides genitalium) protein is Large ribosomal subunit protein bL20 (rplT).